Here is a 180-residue protein sequence, read N- to C-terminus: NAD(P)H-quinone oxidoreductase subunit I, chloroplastic (180 aa).

4Fe-4S ferredoxin-type domains follow at residues 55 to 84 and 95 to 124; these read GRIHFEFDKCIACEVCVRVCPIDLPVVDWR and LNYSIDFGICIFCGNCVEYCPTNCLSMTEE. The [4Fe-4S] cluster site is built by cysteine 64, cysteine 67, cysteine 70, cysteine 74, cysteine 104, cysteine 107, cysteine 110, and cysteine 114.

It belongs to the complex I 23 kDa subunit family. As to quaternary structure, NDH is composed of at least 16 different subunits, 5 of which are encoded in the nucleus. Requires [4Fe-4S] cluster as cofactor.

Its subcellular location is the plastid. The protein localises to the chloroplast thylakoid membrane. The enzyme catalyses a plastoquinone + NADH + (n+1) H(+)(in) = a plastoquinol + NAD(+) + n H(+)(out). It carries out the reaction a plastoquinone + NADPH + (n+1) H(+)(in) = a plastoquinol + NADP(+) + n H(+)(out). Functionally, NDH shuttles electrons from NAD(P)H:plastoquinone, via FMN and iron-sulfur (Fe-S) centers, to quinones in the photosynthetic chain and possibly in a chloroplast respiratory chain. The immediate electron acceptor for the enzyme in this species is believed to be plastoquinone. Couples the redox reaction to proton translocation, and thus conserves the redox energy in a proton gradient. The chain is NAD(P)H-quinone oxidoreductase subunit I, chloroplastic from Amborella trichopoda.